A 196-amino-acid chain; its full sequence is Ribonuclease H (196 aa).

In terms of domain architecture, RNase H type-1 spans L58 to K196. Residues D71, E109, D132, and D192 each contribute to the Mg(2+) site.

The protein belongs to the RNase H family. Mn(2+) is required as a cofactor. Mg(2+) serves as cofactor.

Its subcellular location is the cytoplasm. The enzyme catalyses Endonucleolytic cleavage to 5'-phosphomonoester.. Endonuclease that specifically degrades the RNA of RNA-DNA hybrids. The chain is Ribonuclease H (rnhA) from Halalkalibacterium halodurans (strain ATCC BAA-125 / DSM 18197 / FERM 7344 / JCM 9153 / C-125) (Bacillus halodurans).